The sequence spans 289 residues: 3-methyl-2-oxobutanoate hydroxymethyltransferase (289 aa).

Positions 50 and 89 each coordinate Mg(2+). Residues 50-51 (DS), D89, and K119 contribute to the 3-methyl-2-oxobutanoate site. E121 contributes to the Mg(2+) binding site. The active-site Proton acceptor is E188. The disordered stretch occupies residues 266–289 (AQHSFGMPEDEQRRWEENVSGADD).

The protein belongs to the PanB family. As to quaternary structure, homodecamer; pentamer of dimers. The cofactor is Mg(2+).

It localises to the cytoplasm. The catalysed reaction is 3-methyl-2-oxobutanoate + (6R)-5,10-methylene-5,6,7,8-tetrahydrofolate + H2O = 2-dehydropantoate + (6S)-5,6,7,8-tetrahydrofolate. It participates in cofactor biosynthesis; (R)-pantothenate biosynthesis; (R)-pantoate from 3-methyl-2-oxobutanoate: step 1/2. Its function is as follows. Catalyzes the reversible reaction in which hydroxymethyl group from 5,10-methylenetetrahydrofolate is transferred onto alpha-ketoisovalerate to form ketopantoate. The chain is 3-methyl-2-oxobutanoate hydroxymethyltransferase from Oleidesulfovibrio alaskensis (strain ATCC BAA-1058 / DSM 17464 / G20) (Desulfovibrio alaskensis).